A 168-amino-acid chain; its full sequence is Peptide methionine sulfoxide reductase MsrA 2 (168 aa).

The active site involves cysteine 11.

This sequence belongs to the MsrA Met sulfoxide reductase family.

The enzyme catalyses L-methionyl-[protein] + [thioredoxin]-disulfide + H2O = L-methionyl-(S)-S-oxide-[protein] + [thioredoxin]-dithiol. It carries out the reaction [thioredoxin]-disulfide + L-methionine + H2O = L-methionine (S)-S-oxide + [thioredoxin]-dithiol. Functionally, has an important function as a repair enzyme for proteins that have been inactivated by oxidation. Catalyzes the reversible oxidation-reduction of methionine sulfoxide in proteins to methionine. The polypeptide is Peptide methionine sulfoxide reductase MsrA 2 (Rhodopirellula baltica (strain DSM 10527 / NCIMB 13988 / SH1)).